The sequence spans 90 residues: Neuropeptide-like 3 (90 aa).

An N-terminal signal peptide occupies residues 1 to 16 (MFKLCVFVALLSLAAA). Propeptides lie at residues 17 to 54 (APAPAPAPAPAPGLIGPGIVAPGIWGPTVVGSPLLAPQ) and 67 to 79 (AITQVHPSPLLIK). Isoleucine 89 is modified (isoleucine amide).

The protein resides in the secreted. The protein is Neuropeptide-like 3 (Nplp3) of Drosophila melanogaster (Fruit fly).